We begin with the raw amino-acid sequence, 212 residues long: Probable transaldolase (212 aa).

Lys-84 functions as the Schiff-base intermediate with substrate in the catalytic mechanism.

It belongs to the transaldolase family. Type 3B subfamily.

The protein resides in the cytoplasm. It catalyses the reaction D-sedoheptulose 7-phosphate + D-glyceraldehyde 3-phosphate = D-erythrose 4-phosphate + beta-D-fructose 6-phosphate. Its pathway is carbohydrate degradation; pentose phosphate pathway; D-glyceraldehyde 3-phosphate and beta-D-fructose 6-phosphate from D-ribose 5-phosphate and D-xylulose 5-phosphate (non-oxidative stage): step 2/3. Its function is as follows. Transaldolase is important for the balance of metabolites in the pentose-phosphate pathway. The polypeptide is Probable transaldolase (Bacillus velezensis (strain DSM 23117 / BGSC 10A6 / LMG 26770 / FZB42) (Bacillus amyloliquefaciens subsp. plantarum)).